Here is a 277-residue protein sequence, read N- to C-terminus: Hematopoietically-expressed homeobox protein HHEX (277 aa).

Disordered stretches follow at residues 47–69 (AAPAPHSLPAPPPPTLPSPNSSF) and 199–277 (WRRL…SATR). The span at 52-63 (HSLPAPPPPTLP) shows a compositional bias: pro residues. A DNA-binding region (homeobox) is located at residues 144-203 (RKGGQVRFSNEQTIELEKKFETQKYLSPPERKRLAKLLQLSERQVKTWFQNRRAKWRRLK). Residues 210–226 (TKKEEAEGTGDHGDPRS) show a composition bias toward basic and acidic residues. Residues 250–266 (EDPESDVSDDSDQEVDI) show a composition bias toward acidic residues.

In terms of tissue distribution, in all hematopoietic tissues except peripheral blood erythrocytes and in the liver and lung.

It is found in the nucleus. Recognizes the DNA sequence 5'-ATTAA-3'. Transcriptional repressor. May play a role in hematopoietic differentiation. The protein is Hematopoietically-expressed homeobox protein HHEX (HHEX) of Gallus gallus (Chicken).